A 96-amino-acid chain; its full sequence is U6 snRNA-associated Sm-like protein LSm8 (96 aa).

The region spanning 1-76 (MTSALENYIN…VAVIGEIDEE (76 aa)) is the Sm domain. Thr-2 carries the N-acetylthreonine modification.

Belongs to the snRNP Sm proteins family. As to quaternary structure, component of the precatalytic spliceosome (spliceosome B complex). Component of the U4/U6-U5 tri-snRNP complex, a building block of the precatalytic spliceosome (spliceosome B complex). The U4/U6-U5 tri-snRNP complex is composed of the U4, U6 and U5 snRNAs and at least PRPF3, PRPF4, PRPF6, PRPF8, PRPF31, SNRNP200, TXNL4A, SNRNP40, SNRPB, SNRPD1, SNRPD2, SNRPD3, SNRPE, SNRPF, SNRPG, DDX23, CD2BP2, PPIH, SNU13, EFTUD2, SART1 and USP39, plus LSM2, LSM3, LSM4, LSM5, LSM6, LSM7 and LSM8. LSM2, LSM3, LSM4, LSM5, LSM6, LSM7 and LSM8 form a heptameric, ring-shaped subcomplex (the LSM2-8 complex) that is part of the U4/U6-U5 tri-snRNP complex and the precatalytic spliceosome.

The protein resides in the nucleus. Functionally, plays a role in pre-mRNA splicing as component of the U4/U6-U5 tri-snRNP complex that is involved in spliceosome assembly, and as component of the precatalytic spliceosome (spliceosome B complex). The heptameric LSM2-8 complex binds specifically to the 3'-terminal U-tract of U6 snRNA. This Bos taurus (Bovine) protein is U6 snRNA-associated Sm-like protein LSm8 (LSM8).